Reading from the N-terminus, the 60-residue chain is UPF0434 protein NMC0623 (60 aa).

It belongs to the UPF0434 family.

This Neisseria meningitidis serogroup C / serotype 2a (strain ATCC 700532 / DSM 15464 / FAM18) protein is UPF0434 protein NMC0623.